The chain runs to 266 residues: Orotidine 5'-phosphate decarboxylase (266 aa).

Residues aspartate 38, 60-62, 92-101, tyrosine 218, and arginine 236 contribute to the substrate site; these read KTH and DRKFADIGNT. The active-site Proton donor is lysine 94.

The protein belongs to the OMP decarboxylase family.

It carries out the reaction orotidine 5'-phosphate + H(+) = UMP + CO2. It participates in pyrimidine metabolism; UMP biosynthesis via de novo pathway; UMP from orotate: step 2/2. The sequence is that of Orotidine 5'-phosphate decarboxylase (URA3) from Candida maltosa (Yeast).